Reading from the N-terminus, the 308-residue chain is Testis-specific Y-encoded protein 1 (308 aa).

It belongs to the nucleosome assembly protein (NAP) family. In terms of processing, phosphorylated. Specifically expressed in testicular tissues. Isoform 1 and isoform 2 are expressed in spermatogonia and spermatocytes. Found in early testicular carcinoma in situ, spermatogonial cells in testicular tissues of 46,X,Y female and in prostate cancer cell lines.

The protein localises to the cytoplasm. Its subcellular location is the nucleus. Functionally, may be involved in sperm differentiation and proliferation. The protein is Testis-specific Y-encoded protein 1 (TSPY1) of Homo sapiens (Human).